The primary structure comprises 352 residues: Protein MGF 360-16R (352 aa).

This sequence belongs to the asfivirus MGF 360 family.

Plays a role in virus cell tropism, and may be required for efficient virus replication in macrophages. This is Protein MGF 360-16R from African swine fever virus (isolate Tick/South Africa/Pretoriuskop Pr4/1996) (ASFV).